The following is a 718-amino-acid chain: Cyclomaltodextrin glucanotransferase (718 aa).

Positions 1-34 (MFQMAKRAFLSTTLTLGLLAGSALPFLPASAAYA) are cleaved as a signal peptide. The tract at residues 35-172 (DPDIAVTNKQ…GIKIIIDFAP (138 aa)) is A1. Ca(2+) is bound by residues Asp-61, Asn-63, Asn-66, and Asn-67. An intrachain disulfide couples Cys-77 to Cys-84. Residues Gly-85 and Asp-87 each coordinate Ca(2+). Position 134–135 (134–135 (YW)) interacts with substrate. Asn-173 is a binding site for Ca(2+). Residues 173-236 (NHTSPAMETD…NLYDLADFNH (64 aa)) form a b region. Residue His-174 participates in substrate binding. A Ca(2+)-binding site is contributed by Ile-224. 227–230 (NLYD) serves as a coordination point for substrate. Asp-233 contributes to the Ca(2+) binding site. The segment at 237–440 (NNATIDKYFK…LRKSNPAIAY (204 aa)) is A2. Arg-261 serves as a coordination point for substrate. The Nucleophile role is filled by Asp-263. 266 to 267 (KH) contributes to the substrate binding site. Ca(2+) is bound at residue His-267. Glu-291 acts as the Proton donor in catalysis. Residues His-361, Asp-405, and Arg-409 each contribute to the substrate site. A c region spans residues 441-528 (GSTQQRWINN…ATAVWQYTAA (88 aa)). Positions 529-614 (ETTPTIGHVG…SNAYNHFTIL (86 aa)) are d. The IPT/TIG domain occupies 532–612 (PTIGHVGPVM…VNSNAYNHFT (81 aa)). Residues 613 to 718 (ILTGDQVTVR…GTATVTVNWQ (106 aa)) enclose the CBM20 domain. The segment at 615-718 (TGDQVTVRFV…GTATVTVNWQ (104 aa)) is e.

It belongs to the glycosyl hydrolase 13 family. As to quaternary structure, monomer. Ca(2+) is required as a cofactor.

The protein resides in the secreted. It catalyses the reaction Cyclizes part of a (1-&gt;4)-alpha-D-glucan chain by formation of a (1-&gt;4)-alpha-D-glucosidic bond.. In Bacillus sp. (strain 6.6.3), this protein is Cyclomaltodextrin glucanotransferase (cgt).